The sequence spans 425 residues: CinA-like protein (425 aa).

It belongs to the CinA family.

The chain is CinA-like protein from Mycobacterium marinum (strain ATCC BAA-535 / M).